A 607-amino-acid polypeptide reads, in one-letter code: uncharacterized protein (607 aa).

The zn(2)-C6 fungal-type DNA-binding region spans 16–44 (CTVCRKRKLKCDGNKPCGRCIRLNTPKEC).

The protein resides in the nucleus. This is an uncharacterized protein from Saccharomyces cerevisiae (strain ATCC 204508 / S288c) (Baker's yeast).